The sequence spans 965 residues: Collagen alpha-1(I) chain (965 aa).

A disordered region spans residues 1–965 (GGISVPGPMG…PGPPGPPGPP (965 aa)). A 4-hydroxyproline mark is found at Pro-18, Pro-21, Pro-23, Pro-32, Pro-35, Pro-38, Pro-53, Pro-68, Pro-74, Pro-83, and Pro-89. Residues 26-44 (QGFQGPPGEPGEPGSSGPM) are compositionally biased toward low complexity. The span at 56–70 (NGDDGEAGKPGRPGE) shows a compositional bias: basic and acidic residues. Lys-92 is subject to 5-hydroxylysine; alternate. The O-linked (Gal...) hydroxylysine; alternate glycan is linked to Lys-92. Residue Ser-98 is modified to Phosphoserine. Over residues 106–122 (DAGPAGPKGEPGSPGEN) the composition is skewed to low complexity. A 4-hydroxyproline mark is found at Pro-116, Pro-119, Pro-125, Pro-139, Pro-160, Pro-169, Pro-172, Pro-199, Pro-202, Pro-214, Pro-220, Pro-229, Pro-235, Pro-238, and Pro-253. Residues 139 to 157 (PGASGPAGARGNDGATGAA) are compositionally biased toward low complexity. A compositionally biased stretch (pro residues) spans 159–171 (PPGPTGPAGPPGF). A compositionally biased stretch (low complexity) spans 205–244 (AGAAGPAGNPGADGQPGAKGANGAPGIAGAPGFPGARGPS). Residue Lys-256 is modified to 5-hydroxylysine. 4-hydroxyproline is present on residues Pro-262, Pro-265, Pro-269, Pro-278, Pro-293, Pro-299, Pro-308, and Pro-314. Gly residues predominate over residues 303-312 (GERGGPGSRG). At Lys-323 the chain carries 5-hydroxylysine. 4-hydroxyproline is present on residues Pro-326, Pro-332, Pro-338, Pro-347, Pro-350, Pro-359, Pro-368, Pro-374, Pro-386, Pro-395, Pro-404, Pro-407, Pro-425, Pro-442, Pro-448, Pro-454, Pro-460, Pro-466, Pro-472, Pro-484, Pro-493, Pro-506, Pro-512, and Pro-521. Residues 341–367 (KGLTGSPGSPGPDGKTGPPGPAGQDGR) are compositionally biased toward low complexity. Low complexity predominate over residues 376–395 (ARGQAGVMGFPGPKGAAGEP). Low complexity predominate over residues 454–463 (PGEAGKPGEQ). Lys-533 is modified (5-hydroxylysine). Residues Pro-539, Pro-554, and Pro-560 each carry the 4-hydroxyproline modification. Residues 566–580 (SGPSGPAGPTGARGA) are compositionally biased toward low complexity. At Ser-569 the chain carries Phosphoserine. Residues Pro-581, Pro-587, Pro-590, Pro-599, Pro-605, Pro-623, Pro-632, and Pro-641 each carry the 4-hydroxyproline modification. Positions 593 to 620 (AGFAGPPGADGQPGAKGEPGDAGAKGDA) are enriched in low complexity. Lys-644 is modified (5-hydroxylysine). The span at 649–665 (SAGPPGATGFPGAAGRV) shows a compositional bias: low complexity. 2 positions are modified to 4-hydroxyproline: Pro-653 and Pro-659. Pro-667 is subject to 3-hydroxyproline. 4-hydroxyproline occurs at positions 668, 677, 680, 716, 725, 743, 752, 755, 761, 776, 782, 788, 796, and 802. Low complexity predominate over residues 710-725 (SGEKGSPGADGPAGAP). A compositionally biased stretch (pro residues) spans 775 to 785 (PPGPMGPPGLA). Residue Lys-811 is modified to 5-hydroxylysine. Pro-819, Pro-822, and Pro-825 each carry 4-hydroxyproline. Pro residues predominate over residues 819 to 831 (PGAPGAPGAPGPV). Residues 851 to 865 (AGPAGARGPAGPQGP) are compositionally biased toward low complexity. The span at 866 to 880 (RGDKGETGEQGDRGI) shows a compositional bias: basic and acidic residues. 5-hydroxylysine is present on Lys-869. 5-hydroxylysine; alternate is present on Lys-881. An O-linked (Gal...) hydroxylysine; alternate glycan is attached at Lys-881. 4-hydroxyproline is present on residues Pro-896, Pro-899, Pro-917, and Pro-932. Low complexity predominate over residues 899–932 (PGEQGPSGASGPAGPRGPPGSAGSPGKDGLNGLP). Pro-937 is modified (3-hydroxyproline). Pro-938 carries the post-translational modification 4-hydroxyproline. The segment covering 950-965 (VGPPGPPGPPGPPGPP) has biased composition (pro residues). Pro-952 is modified (3-hydroxyproline). Pro-953 carries the 4-hydroxyproline modification. A 3-hydroxyproline modification is found at Pro-955. Pro-956 is subject to 4-hydroxyproline. 3-hydroxyproline is present on Pro-958. Residues Pro-959, Pro-962, and Pro-965 each carry the 4-hydroxyproline modification.

The protein belongs to the fibrillar collagen family. Trimers of one alpha 2(I) and two alpha 1(I) chains. Contains mostly 4-hydroxyproline. Proline residues at the third position of the tripeptide repeating unit (G-X-Y) are hydroxylated in some or all of the chains. Post-translationally, contains 3-hydroxyproline at a few sites. This modification occurs on the first proline residue in the sequence motif Gly-Pro-Hyp, where Hyp is 4-hydroxyproline. In terms of processing, lysine residues at the third position of the tripeptide repeating unit (G-X-Y) are 5-hydroxylated in some or all of the chains. O-glycosylated on hydroxylated lysine residues. The O-linked glycan consists of a Glc-Gal disaccharide. As to expression, expressed in bones.

The protein resides in the secreted. It localises to the extracellular space. Its subcellular location is the extracellular matrix. Its function is as follows. Type I collagen is a member of group I collagen (fibrillar forming collagen). This is Collagen alpha-1(I) chain from Acratocnus sp. (strain SLP-2019) (Ground sloth).